Consider the following 198-residue polypeptide: RNA pyrophosphohydrolase (198 aa).

The Nudix hydrolase domain maps to 6–149; sequence GYRPNVGIVI…KKEVYRKAMK (144 aa). Positions 38-59 match the Nudix box motif; sequence GGINDNESAEQAMYRELFEEVG.

It belongs to the Nudix hydrolase family. RppH subfamily. It depends on a divalent metal cation as a cofactor.

Accelerates the degradation of transcripts by removing pyrophosphate from the 5'-end of triphosphorylated RNA, leading to a more labile monophosphorylated state that can stimulate subsequent ribonuclease cleavage. The chain is RNA pyrophosphohydrolase from Pasteurella multocida (strain Pm70).